The chain runs to 187 residues: Macro domain-containing protein MM_0177 (187 aa).

In terms of domain architecture, Macro spans 8-187; it reads VEEGIRMELN…SIKKALSKIL (180 aa).

This sequence belongs to the MacroD-type family.

The protein is Macro domain-containing protein MM_0177 of Methanosarcina mazei (strain ATCC BAA-159 / DSM 3647 / Goe1 / Go1 / JCM 11833 / OCM 88) (Methanosarcina frisia).